A 156-amino-acid chain; its full sequence is Ribosomal RNA large subunit methyltransferase H (156 aa).

S-adenosyl-L-methionine is bound by residues L73, G104, and L123–F128.

Belongs to the RNA methyltransferase RlmH family. As to quaternary structure, homodimer.

Its subcellular location is the cytoplasm. It catalyses the reaction pseudouridine(1915) in 23S rRNA + S-adenosyl-L-methionine = N(3)-methylpseudouridine(1915) in 23S rRNA + S-adenosyl-L-homocysteine + H(+). Its function is as follows. Specifically methylates the pseudouridine at position 1915 (m3Psi1915) in 23S rRNA. This Thioalkalivibrio sulfidiphilus (strain HL-EbGR7) protein is Ribosomal RNA large subunit methyltransferase H.